The sequence spans 344 residues: tRNA N6-adenosine threonylcarbamoyltransferase (344 aa).

2 residues coordinate Fe cation: H111 and H115. Substrate-binding positions include 136–140 (LVSGG), D169, G182, and N279. D307 contributes to the Fe cation binding site.

It belongs to the KAE1 / TsaD family. Fe(2+) serves as cofactor.

Its subcellular location is the cytoplasm. The catalysed reaction is L-threonylcarbamoyladenylate + adenosine(37) in tRNA = N(6)-L-threonylcarbamoyladenosine(37) in tRNA + AMP + H(+). Required for the formation of a threonylcarbamoyl group on adenosine at position 37 (t(6)A37) in tRNAs that read codons beginning with adenine. Is involved in the transfer of the threonylcarbamoyl moiety of threonylcarbamoyl-AMP (TC-AMP) to the N6 group of A37, together with TsaE and TsaB. TsaD likely plays a direct catalytic role in this reaction. The polypeptide is tRNA N6-adenosine threonylcarbamoyltransferase (Mannheimia succiniciproducens (strain KCTC 0769BP / MBEL55E)).